Reading from the N-terminus, the 379-residue chain is Cytochrome b (379 aa).

The next 4 helical transmembrane spans lie at 34-54, 78-99, 114-134, and 179-199; these read YGSL…FLSM, WLLR…YLHA, WNIG…GYVL, and FFAF…LHIM. Residues histidine 84 and histidine 98 each contribute to the heme b site. 2 residues coordinate heme b: histidine 183 and histidine 197. Histidine 202 contributes to the a ubiquinone binding site. Helical transmembrane passes span 227–247, 289–309, 321–341, and 349–369; these read IKDT…VLFE, LGGV…PLTS, LNKT…WIGG, and IIIG…SPTI.

The protein belongs to the cytochrome b family. In terms of assembly, the main subunits of complex b-c1 are: cytochrome b, cytochrome c1 and the Rieske protein. The cofactor is heme b.

The protein resides in the mitochondrion inner membrane. Component of the ubiquinol-cytochrome c reductase complex (complex III or cytochrome b-c1 complex) that is part of the mitochondrial respiratory chain. The b-c1 complex mediates electron transfer from ubiquinol to cytochrome c. Contributes to the generation of a proton gradient across the mitochondrial membrane that is then used for ATP synthesis. This Lumbricus terrestris (Common earthworm) protein is Cytochrome b (MT-CYB).